Consider the following 166-residue polypeptide: Protein-export protein SecB (166 aa).

Positions 1–16 (MTDTSAAGNPTPGQQP) are enriched in polar residues. A disordered region spans residues 1–21 (MTDTSAAGNPTPGQQPANPPS).

This sequence belongs to the SecB family. In terms of assembly, homotetramer, a dimer of dimers. One homotetramer interacts with 1 SecA dimer.

It localises to the cytoplasm. Its function is as follows. One of the proteins required for the normal export of preproteins out of the cell cytoplasm. It is a molecular chaperone that binds to a subset of precursor proteins, maintaining them in a translocation-competent state. It also specifically binds to its receptor SecA. The protein is Protein-export protein SecB of Hyphomonas neptunium (strain ATCC 15444).